Reading from the N-terminus, the 1273-residue chain is DNA-directed RNA polymerase subunit beta (1273 aa).

Belongs to the RNA polymerase beta chain family. The RNAP catalytic core consists of 2 alpha, 1 beta, 1 beta' and 1 omega subunit. When a sigma factor is associated with the core the holoenzyme is formed, which can initiate transcription.

The enzyme catalyses RNA(n) + a ribonucleoside 5'-triphosphate = RNA(n+1) + diphosphate. Functionally, DNA-dependent RNA polymerase catalyzes the transcription of DNA into RNA using the four ribonucleoside triphosphates as substrates. This Onion yellows phytoplasma (strain OY-M) protein is DNA-directed RNA polymerase subunit beta.